A 251-amino-acid polypeptide reads, in one-letter code: Duodenase-1 (251 aa).

The N-terminal stretch at 1 to 17 (MVLLLLLVALLSPTGEA) is a signal peptide. Residues 18–19 (GK) constitute a propeptide that is removed on maturation. The Peptidase S1 domain occupies 20 to 242 (IIGGHEAKPH…SFLSWIHSTM (223 aa)). C48 and C64 are disulfide-bonded. H63 (charge relay system) is an active-site residue. An N-linked (GlcNAc...) asparagine glycan is attached at N70. Catalysis depends on D107, which acts as the Charge relay system. Cystine bridges form between C141–C207 and C172–C186. S201 functions as the Charge relay system in the catalytic mechanism.

Belongs to the peptidase S1 family. As to quaternary structure, monomer.

Its function is as follows. Protease which has both trypsin-like and chymotrypsin-like activities. Shows a preferential cleavage after Lys, Arg, Tyr, Phe, and Leu residues. This Bos taurus (Bovine) protein is Duodenase-1 (BDMD1).